Here is a 475-residue protein sequence, read N- to C-terminus: Putative poly(A) polymerase catalytic subunit (475 aa).

Belongs to the poxviridae poly(A) polymerase catalytic subunit family. Highly divergent.

Its subcellular location is the virion. The enzyme catalyses RNA(n) + ATP = RNA(n)-3'-adenine ribonucleotide + diphosphate. Polymerase that creates the 3'-poly(A) tail of mRNA's. The sequence is that of Putative poly(A) polymerase catalytic subunit from Ornithodoros (relapsing fever ticks).